A 507-amino-acid chain; its full sequence is ATP synthase subunit alpha, chloroplastic (507 aa).

170–177 (GDRQTGKT) is an ATP binding site.

Belongs to the ATPase alpha/beta chains family. As to quaternary structure, F-type ATPases have 2 components, CF(1) - the catalytic core - and CF(0) - the membrane proton channel. CF(1) has five subunits: alpha(3), beta(3), gamma(1), delta(1), epsilon(1). CF(0) has four main subunits: a, b, b' and c.

It localises to the plastid. It is found in the chloroplast thylakoid membrane. It carries out the reaction ATP + H2O + 4 H(+)(in) = ADP + phosphate + 5 H(+)(out). Its function is as follows. Produces ATP from ADP in the presence of a proton gradient across the membrane. The alpha chain is a regulatory subunit. The sequence is that of ATP synthase subunit alpha, chloroplastic from Daucus carota (Wild carrot).